Reading from the N-terminus, the 221-residue chain is Deoxyribose-phosphate aldolase (221 aa).

The active-site Proton donor/acceptor is Asp89. Catalysis depends on Lys151, which acts as the Schiff-base intermediate with acetaldehyde. The active-site Proton donor/acceptor is the Lys180.

The protein belongs to the DeoC/FbaB aldolase family. DeoC type 1 subfamily.

It is found in the cytoplasm. The enzyme catalyses 2-deoxy-D-ribose 5-phosphate = D-glyceraldehyde 3-phosphate + acetaldehyde. It functions in the pathway carbohydrate degradation; 2-deoxy-D-ribose 1-phosphate degradation; D-glyceraldehyde 3-phosphate and acetaldehyde from 2-deoxy-alpha-D-ribose 1-phosphate: step 2/2. Functionally, catalyzes a reversible aldol reaction between acetaldehyde and D-glyceraldehyde 3-phosphate to generate 2-deoxy-D-ribose 5-phosphate. This Mesomycoplasma hyopneumoniae (strain 232) (Mycoplasma hyopneumoniae) protein is Deoxyribose-phosphate aldolase.